The following is a 142-amino-acid chain: Large ribosomal subunit protein uL16 (142 aa).

The segment covering 1-14 (MLSPRRTKFRKQQR) has biased composition (basic residues). The interval 1-22 (MLSPRRTKFRKQQRGRMTGKAT) is disordered.

This sequence belongs to the universal ribosomal protein uL16 family. As to quaternary structure, part of the 50S ribosomal subunit.

Functionally, binds 23S rRNA and is also seen to make contacts with the A and possibly P site tRNAs. The chain is Large ribosomal subunit protein uL16 from Synechococcus elongatus (strain ATCC 33912 / PCC 7942 / FACHB-805) (Anacystis nidulans R2).